Here is a 265-residue protein sequence, read N- to C-terminus: Ribosomal RNA small subunit methyltransferase A (265 aa).

Asparagine 13, leucine 15, glycine 39, glutamate 59, aspartate 87, and asparagine 108 together coordinate S-adenosyl-L-methionine.

This sequence belongs to the class I-like SAM-binding methyltransferase superfamily. rRNA adenine N(6)-methyltransferase family. RsmA subfamily.

It is found in the cytoplasm. The catalysed reaction is adenosine(1518)/adenosine(1519) in 16S rRNA + 4 S-adenosyl-L-methionine = N(6)-dimethyladenosine(1518)/N(6)-dimethyladenosine(1519) in 16S rRNA + 4 S-adenosyl-L-homocysteine + 4 H(+). Functionally, specifically dimethylates two adjacent adenosines (A1518 and A1519) in the loop of a conserved hairpin near the 3'-end of 16S rRNA in the 30S particle. May play a critical role in biogenesis of 30S subunits. The chain is Ribosomal RNA small subunit methyltransferase A from Aliarcobacter butzleri (strain RM4018) (Arcobacter butzleri).